Here is a 544-residue protein sequence, read N- to C-terminus: Prolyl 4-hydroxylase subunit alpha-3 (544 aa).

The first 24 residues, 1-24 (MGPGARLAALLVLLKLGVGDPAAA), serve as a signal peptide directing secretion. Residues 227-260 (EDALDYLAFACYQVGNVSCALSLSREFLVYSPDN) form a TPR repeat. N242 carries an N-linked (GlcNAc...) asparagine glycan. The Fe2OG dioxygenase domain maps to 422 to 529 (YAEYLQVVNY…KWVANKWIHE (108 aa)). Residues H440 and D442 each coordinate Fe cation. The N-linked (GlcNAc...) asparagine glycan is linked to N482. H510 is a Fe cation binding site. K520 contributes to the 2-oxoglutarate binding site.

It belongs to the P4HA family. In terms of assembly, heterotetramer of two alpha-3 chains and two beta chains (the beta chain is the multi-functional PDI). Fe(2+) is required as a cofactor. L-ascorbate serves as cofactor. N-glycosylation plays no role in the catalytic activity.

The protein localises to the endoplasmic reticulum lumen. The enzyme catalyses L-prolyl-[collagen] + 2-oxoglutarate + O2 = trans-4-hydroxy-L-prolyl-[collagen] + succinate + CO2. Catalyzes the post-translational formation of 4-hydroxyproline in -Xaa-Pro-Gly- sequences in collagens and other proteins. This is Prolyl 4-hydroxylase subunit alpha-3 (P4ha3) from Rattus norvegicus (Rat).